A 308-amino-acid polypeptide reads, in one-letter code: tRNA pseudouridine synthase B (308 aa).

D47 (nucleophile) is an active-site residue.

The protein belongs to the pseudouridine synthase TruB family. Type 1 subfamily.

It carries out the reaction uridine(55) in tRNA = pseudouridine(55) in tRNA. Its function is as follows. Responsible for synthesis of pseudouridine from uracil-55 in the psi GC loop of transfer RNAs. The sequence is that of tRNA pseudouridine synthase B from Xanthomonas campestris pv. campestris (strain 8004).